We begin with the raw amino-acid sequence, 494 residues long: Probable cytosol aminopeptidase (494 aa).

Mn(2+) contacts are provided by lysine 260 and aspartate 265. The active site involves lysine 272. Mn(2+)-binding residues include aspartate 283, aspartate 342, and glutamate 344. Arginine 346 is an active-site residue.

It belongs to the peptidase M17 family. Requires Mn(2+) as cofactor.

The protein resides in the cytoplasm. The catalysed reaction is Release of an N-terminal amino acid, Xaa-|-Yaa-, in which Xaa is preferably Leu, but may be other amino acids including Pro although not Arg or Lys, and Yaa may be Pro. Amino acid amides and methyl esters are also readily hydrolyzed, but rates on arylamides are exceedingly low.. The enzyme catalyses Release of an N-terminal amino acid, preferentially leucine, but not glutamic or aspartic acids.. Presumably involved in the processing and regular turnover of intracellular proteins. Catalyzes the removal of unsubstituted N-terminal amino acids from various peptides. The protein is Probable cytosol aminopeptidase of Bacillus anthracis (strain CDC 684 / NRRL 3495).